The primary structure comprises 697 residues: MENSVKMDNSGNSTPLPQRQRRANNQPNKNIGKLGPQKQNEGASDGGPAEKRQRFGPNNQNGGGGSVVGGGGGGGGGGGQNQNKNFANKGGFGGGGNRNRNRGGNQNRSNFQNQNQNQKSTTDAPKADGGNLNDKSNEANNANQSNSNSAAQAQAQLQAQAQAHAQAQAQAQAQAHAQAQAQAHAHAQNQAFRARGGGGGGGGGGGGGGGGGGGGGGGGGGGGGRDRNPDRRGGGGGGGQNSGGGNNSQRGDDFFYSQRLRSISGPTHELPPIEVAQETKFSGRNRLYVGNLTNDITDEELREMFKPYGEIGEIFSNLEKNFTFLKVDYHINAEKAKRPLDGSMRKGRHVRVRFAPNATILRVSNLTPFVSNELLYKSFEIFGPIERASITVDDRGKHLGEGTVEFAKKSSASACLRLCNEKCFFLTASLRPCLVEPMEVNDDNDGLPEKALNKKLQEFNQERSVGPRFADLNSFEHEYGSRWKQLHDLFKSKQDALKRELKMEEEKLDAQMEYARYEQETELLRQELRKRESDNERKKLEWEMREKQAEEMRKREEETMRRHQTEMQSRMVRQEEDMRRRQQENTLFMQAQQLNSLLDQQEGFGGGNGGGGGGGGGGGGVGNSNFDNFGGNSNSPFEVFRGNNNSSMAGNNAGPGANNQQQDSFAAFEFGVNNMNQGGNQRGNNGGNNVPWGRRRF.

The span at 1–29 (MENSVKMDNSGNSTPLPQRQRRANNQPNK) shows a compositional bias: polar residues. Residues 1 to 253 (MENSVKMDNS…GGNNSQRGDD (253 aa)) form a disordered region. A compositionally biased stretch (gly residues) spans 61–80 (NGGGGSVVGGGGGGGGGGGQ). 2 stretches are compositionally biased toward low complexity: residues 102 to 118 (RGGN…NQNQ) and 139 to 191 (ANNA…QNQA). Positions 195–223 (RGGGGGGGGGGGGGGGGGGGGGGGGGGGG) are enriched in gly residues. Basic and acidic residues predominate over residues 224–233 (GRDRNPDRRG). Over residues 234–246 (GGGGGGQNSGGGN) the composition is skewed to gly residues. 2 consecutive RRM domains span residues 285-357 (NRLY…FAPN) and 359-445 (TILR…DDND). Residues 488 to 586 (DLFKSKQDAL…DMRRRQQENT (99 aa)) are a coiled coil. The segment covering 551–565 (EMRKREEETMRRHQT) has biased composition (basic and acidic residues). Disordered stretches follow at residues 551 to 575 (EMRK…VRQE) and 601 to 697 (QEGF…RRRF). The segment covering 603 to 622 (GFGGGNGGGGGGGGGGGGVG) has biased composition (gly residues). Low complexity-rich tracts occupy residues 623–635 (NSNF…NSNS) and 642–659 (GNNN…GANN).

In terms of biological role, required for normal vision and courtship behavior in Drosophila. This chain is Protein no-on-transient A (nonA), found in Drosophila virilis (Fruit fly).